The primary structure comprises 443 residues: Ribosomal protein uS12 methylthiotransferase RimO (443 aa).

In terms of domain architecture, MTTase N-terminal spans 5-115 (PNIGFISLGC…VMKHVHKYVP (111 aa)). [4Fe-4S] cluster contacts are provided by Cys-14, Cys-50, Cys-79, Cys-147, Cys-151, and Cys-154. Residues 133–374 (LTPKHYAYLK…MQVQQRISAA (242 aa)) enclose the Radical SAM core domain. One can recognise a TRAM domain in the interval 377–443 (QQKVGKTLAV…ADEYDLWGTC (67 aa)).

This sequence belongs to the methylthiotransferase family. RimO subfamily. The cofactor is [4Fe-4S] cluster.

The protein localises to the cytoplasm. The catalysed reaction is L-aspartate(89)-[ribosomal protein uS12]-hydrogen + (sulfur carrier)-SH + AH2 + 2 S-adenosyl-L-methionine = 3-methylsulfanyl-L-aspartate(89)-[ribosomal protein uS12]-hydrogen + (sulfur carrier)-H + 5'-deoxyadenosine + L-methionine + A + S-adenosyl-L-homocysteine + 2 H(+). Functionally, catalyzes the methylthiolation of an aspartic acid residue of ribosomal protein uS12. This Actinobacillus pleuropneumoniae serotype 7 (strain AP76) protein is Ribosomal protein uS12 methylthiotransferase RimO.